Consider the following 314-residue polypeptide: 4-hydroxy-3-methylbut-2-enyl diphosphate reductase (314 aa).

A [4Fe-4S] cluster-binding site is contributed by Cys12. (2E)-4-hydroxy-3-methylbut-2-enyl diphosphate is bound by residues His43 and His81. The dimethylallyl diphosphate site is built by His43 and His81. Residues His43 and His81 each coordinate isopentenyl diphosphate. Position 103 (Cys103) interacts with [4Fe-4S] cluster. His131 contributes to the (2E)-4-hydroxy-3-methylbut-2-enyl diphosphate binding site. His131 lines the dimethylallyl diphosphate pocket. His131 is an isopentenyl diphosphate binding site. Glu133 functions as the Proton donor in the catalytic mechanism. Thr170 is a (2E)-4-hydroxy-3-methylbut-2-enyl diphosphate binding site. Cys198 provides a ligand contact to [4Fe-4S] cluster. Residues Ser226, Asn228, and Ser271 each contribute to the (2E)-4-hydroxy-3-methylbut-2-enyl diphosphate site. The dimethylallyl diphosphate site is built by Ser226, Asn228, and Ser271. Isopentenyl diphosphate contacts are provided by Ser226, Asn228, and Ser271.

The protein belongs to the IspH family. It depends on [4Fe-4S] cluster as a cofactor.

It catalyses the reaction isopentenyl diphosphate + 2 oxidized [2Fe-2S]-[ferredoxin] + H2O = (2E)-4-hydroxy-3-methylbut-2-enyl diphosphate + 2 reduced [2Fe-2S]-[ferredoxin] + 2 H(+). The enzyme catalyses dimethylallyl diphosphate + 2 oxidized [2Fe-2S]-[ferredoxin] + H2O = (2E)-4-hydroxy-3-methylbut-2-enyl diphosphate + 2 reduced [2Fe-2S]-[ferredoxin] + 2 H(+). It functions in the pathway isoprenoid biosynthesis; dimethylallyl diphosphate biosynthesis; dimethylallyl diphosphate from (2E)-4-hydroxy-3-methylbutenyl diphosphate: step 1/1. Its pathway is isoprenoid biosynthesis; isopentenyl diphosphate biosynthesis via DXP pathway; isopentenyl diphosphate from 1-deoxy-D-xylulose 5-phosphate: step 6/6. Functionally, catalyzes the conversion of 1-hydroxy-2-methyl-2-(E)-butenyl 4-diphosphate (HMBPP) into a mixture of isopentenyl diphosphate (IPP) and dimethylallyl diphosphate (DMAPP). Acts in the terminal step of the DOXP/MEP pathway for isoprenoid precursor biosynthesis. The chain is 4-hydroxy-3-methylbut-2-enyl diphosphate reductase from Bacillus subtilis (strain 168).